The primary structure comprises 65 residues: Large ribosomal subunit protein uL30 (65 aa).

This sequence belongs to the universal ribosomal protein uL30 family. Part of the 50S ribosomal subunit.

The chain is Large ribosomal subunit protein uL30 from Methylobacillus flagellatus (strain ATCC 51484 / DSM 6875 / VKM B-1610 / KT).